The primary structure comprises 349 residues: Beta-hexosaminidase (349 aa).

Substrate-binding positions include Asp-64, Arg-72, Arg-138, and 168-169; that span reads KH. The active-site Proton donor/acceptor is His-181. Asp-252 serves as the catalytic Nucleophile.

Belongs to the glycosyl hydrolase 3 family. NagZ subfamily.

It localises to the cytoplasm. It carries out the reaction Hydrolysis of terminal non-reducing N-acetyl-D-hexosamine residues in N-acetyl-beta-D-hexosaminides.. It functions in the pathway cell wall biogenesis; peptidoglycan recycling. Functionally, plays a role in peptidoglycan recycling by cleaving the terminal beta-1,4-linked N-acetylglucosamine (GlcNAc) from peptide-linked peptidoglycan fragments, giving rise to free GlcNAc, anhydro-N-acetylmuramic acid and anhydro-N-acetylmuramic acid-linked peptides. This chain is Beta-hexosaminidase, found in Methylobacillus flagellatus (strain ATCC 51484 / DSM 6875 / VKM B-1610 / KT).